A 52-amino-acid chain; its full sequence is Small ribosomal subunit protein uS14 (52 aa).

Residues Cys-17, Cys-20, Cys-35, and Cys-38 each contribute to the Zn(2+) site.

This sequence belongs to the universal ribosomal protein uS14 family. Zinc-binding uS14 subfamily. In terms of assembly, part of the 30S ribosomal subunit. Zn(2+) is required as a cofactor.

Its function is as follows. Binds 16S rRNA, required for the assembly of 30S particles. In Halobacterium salinarum (strain ATCC 700922 / JCM 11081 / NRC-1) (Halobacterium halobium), this protein is Small ribosomal subunit protein uS14.